The sequence spans 191 residues: Fe/S biogenesis protein NfuA (191 aa).

[4Fe-4S] cluster contacts are provided by cysteine 149 and cysteine 152.

It belongs to the NfuA family. In terms of assembly, homodimer. Requires [4Fe-4S] cluster as cofactor.

Its function is as follows. Involved in iron-sulfur cluster biogenesis. Binds a 4Fe-4S cluster, can transfer this cluster to apoproteins, and thereby intervenes in the maturation of Fe/S proteins. Could also act as a scaffold/chaperone for damaged Fe/S proteins. This chain is Fe/S biogenesis protein NfuA, found in Erwinia tasmaniensis (strain DSM 17950 / CFBP 7177 / CIP 109463 / NCPPB 4357 / Et1/99).